The chain runs to 151 residues: uncharacterized protein (151 aa).

This is an uncharacterized protein from Aquifex aeolicus (strain VF5).